The primary structure comprises 364 residues: UDP-3-O-acylglucosamine N-acyltransferase (364 aa).

The active-site Proton acceptor is H258.

It belongs to the transferase hexapeptide repeat family. LpxD subfamily. In terms of assembly, homotrimer.

It catalyses the reaction a UDP-3-O-[(3R)-3-hydroxyacyl]-alpha-D-glucosamine + a (3R)-hydroxyacyl-[ACP] = a UDP-2-N,3-O-bis[(3R)-3-hydroxyacyl]-alpha-D-glucosamine + holo-[ACP] + H(+). It functions in the pathway bacterial outer membrane biogenesis; LPS lipid A biosynthesis. In terms of biological role, catalyzes the N-acylation of UDP-3-O-acylglucosamine using 3-hydroxyacyl-ACP as the acyl donor. Is involved in the biosynthesis of lipid A, a phosphorylated glycolipid that anchors the lipopolysaccharide to the outer membrane of the cell. The sequence is that of UDP-3-O-acylglucosamine N-acyltransferase from Burkholderia orbicola (strain AU 1054).